The sequence spans 106 residues: UPF0060 membrane protein R01043 (106 aa).

Helical transmembrane passes span 5-25, 31-51, 61-81, and 85-105; these read AIYFLAALAEITGCFAFWSWL, ALWLIPGMASLALFAWLLTMV, AAYGGVYIVASLSWLWLAEGV, and HWDMTGAAVALAGSAIILAGP.

The protein belongs to the UPF0060 family.

It is found in the cell inner membrane. This Rhizobium meliloti (strain 1021) (Ensifer meliloti) protein is UPF0060 membrane protein R01043.